A 384-amino-acid chain; its full sequence is S-adenosylmethionine synthase (384 aa).

H15 is an ATP binding site. D17 contributes to the Mg(2+) binding site. E43 provides a ligand contact to K(+). Residues E56 and Q99 each contribute to the L-methionine site. Residues 99-109 form a flexible loop region; that stretch reads QSPDINQGVDR. ATP is bound by residues 164-166, 230-231, D239, 245-246, A262, and K266; these read DAK, RF, and RK. Residue D239 participates in L-methionine binding. Position 270 (K270) interacts with L-methionine.

Belongs to the AdoMet synthase family. As to quaternary structure, homotetramer; dimer of dimers. Requires Mg(2+) as cofactor. K(+) serves as cofactor.

It is found in the cytoplasm. It carries out the reaction L-methionine + ATP + H2O = S-adenosyl-L-methionine + phosphate + diphosphate. It functions in the pathway amino-acid biosynthesis; S-adenosyl-L-methionine biosynthesis; S-adenosyl-L-methionine from L-methionine: step 1/1. In terms of biological role, catalyzes the formation of S-adenosylmethionine (AdoMet) from methionine and ATP. The overall synthetic reaction is composed of two sequential steps, AdoMet formation and the subsequent tripolyphosphate hydrolysis which occurs prior to release of AdoMet from the enzyme. The polypeptide is S-adenosylmethionine synthase (Proteus mirabilis (strain HI4320)).